The following is a 688-amino-acid chain: Complement C1s subcomponent (688 aa).

The first 15 residues, 1-15 (MWCIVLFSLLAWVYA), serve as a signal peptide directing secretion. A CUB 1 domain is found at 16–130 (EPTMYGEILS…TGFAAYYVAT (115 aa)). Glu60, Asp68, Asp113, Asp131, Ile132, and Glu134 together coordinate Ca(2+). Cys65 and Cys83 are oxidised to a cystine. An EGF-like; calcium-binding domain is found at 131–172 (DINECTDFVDVPCSHFCNNFIGGYFCSCPPEYFLHDDMKNCG). Cystine bridges form between Cys135–Cys147, Cys143–Cys156, and Cys158–Cys171. 3 residues coordinate Ca(2+): Asn149, Phe150, and Gly153. Asn149 is subject to (3R)-3-hydroxyasparagine. A glycan (N-linked (GlcNAc...) asparagine) is linked at Asn174. The cysteines at positions 175 and 202 are disulfide-linked. The CUB 2 domain maps to 175-290 (CSGDVFTALI…KGWKLRYHGD (116 aa)). 5 residues coordinate Ca(2+): Glu226, Asp236, Asp275, Gly278, and Gln279. A disulfide bond links Cys234 and Cys251. Sushi domains are found at residues 292 to 356 (MPCP…KCQP) and 357 to 423 (VDCG…KCVP). Cystine bridges form between Cys294-Cys341, Cys321-Cys354, Cys359-Cys403, Cys386-Cys421, Cys425-Cys549, Cys595-Cys618, and Cys628-Cys659. Asn406 is a glycosylation site (N-linked (GlcNAc...) asparagine). Residues 438-680 (IIGGSDADIK…YVDWIMKTMQ (243 aa)) enclose the Peptidase S1 domain. Catalysis depends on charge relay system residues His475 and Asp529. The active-site Charge relay system is the Ser632.

The protein belongs to the peptidase S1 family. As to quaternary structure, core component of the complement C1 complex, a calcium-dependent complex composed of 1 molecule of the C1Q subcomplex, 2 molecules of C1R and 2 molecules of C1S. The C1Q subcomplex is composed 18 subunits: 3 chains of C1QA, C1QB, and C1QC trimerize to form 6 collagen-like triple helices connected to six globular ligand-recognition modules. Post-translationally, cleaved and activated by C1R to generate Complement C1s subcomponent heavy and light chains. The iron and 2-oxoglutarate dependent 3-hydroxylation of aspartate and asparagine is (R) stereospecific within EGF domains.

The protein resides in the secreted. It localises to the cell surface. It carries out the reaction Cleavage of Arg-|-Ala bond in complement component C4 to form C4a and C4b, and Lys(or Arg)-|-Lys bond in complement component C2 to form C2a and C2b: the 'classical' pathway C3 convertase.. Cleaved and activated by C1R. Immunoglobulin-binding promotes autoactivation of C1R, which results in the cleavage of the Arg-Ile bond in the catalytic domain. Inhibited by C1 inhibitor (SERPING1). In terms of biological role, component of the complement C1 complex, a multiprotein complex that initiates the classical pathway of the complement system, a cascade of proteins that leads to phagocytosis and breakdown of pathogens and signaling that strengthens the adaptive immune system. C1S is activated following association of the C1 complex with immunoglobulins (IgG or IgM) complexed with antigens to form antigen-antibody complexes on the surface of pathogens. C1S is cleaved and activated by C1R to generate C1s subcomponent heavy and light chains. C1s subcomponent light chain then cleaves and activates C2 and C4, the next components of the classical complement pathway. Serine protease component of the complement C1 complex, which catalyzes cleavage and activation of C2 and C4, the next components of the classical complement pathway. Also able to cleave C1 inhibitor (SERPING1) in vitro; additional evidence is however required to confirm this result in vivo. Also cleaves IGFBP5 and thereby inhibits the trophic effects of IGF1. The protein is Complement C1s subcomponent of Homo sapiens (Human).